The chain runs to 291 residues: uncharacterized protein (291 aa).

This is an uncharacterized protein from Haemophilus influenzae (strain ATCC 51907 / DSM 11121 / KW20 / Rd).